A 116-amino-acid polypeptide reads, in one-letter code: Putative pterin-4-alpha-carbinolamine dehydratase (116 aa).

The protein belongs to the pterin-4-alpha-carbinolamine dehydratase family.

It catalyses the reaction (4aS,6R)-4a-hydroxy-L-erythro-5,6,7,8-tetrahydrobiopterin = (6R)-L-erythro-6,7-dihydrobiopterin + H2O. The chain is Putative pterin-4-alpha-carbinolamine dehydratase from Stenotrophomonas maltophilia (strain R551-3).